The following is a 301-amino-acid chain: Probable alpha-L-glutamate ligase (301 aa).

One can recognise an ATP-grasp domain in the interval leucine 104–glutamate 287. ATP contacts are provided by residues lysine 141, glutamate 178 to tyrosine 179, aspartate 187, and arginine 211 to asparagine 213. Mg(2+)-binding residues include aspartate 248, glutamate 260, and asparagine 262. Mn(2+)-binding residues include aspartate 248, glutamate 260, and asparagine 262.

Belongs to the RimK family. Mg(2+) is required as a cofactor. The cofactor is Mn(2+).

The polypeptide is Probable alpha-L-glutamate ligase (Picosynechococcus sp. (strain ATCC 27264 / PCC 7002 / PR-6) (Agmenellum quadruplicatum)).